A 142-amino-acid chain; its full sequence is Large ribosomal subunit protein uL11 (142 aa).

As to quaternary structure, part of the ribosomal stalk of the 50S ribosomal subunit. Interacts with L10 and the large rRNA to form the base of the stalk. L10 forms an elongated spine to which L12 dimers bind in a sequential fashion forming a multimeric L10(L12)X complex. Lys-40 is trimethylated or acetylated; other modifications may also exist.

Functionally, forms part of the ribosomal stalk which helps the ribosome interact with GTP-bound translation factors. The protein is Large ribosomal subunit protein uL11 of Rhodopseudomonas palustris (strain ATCC BAA-98 / CGA009).